Consider the following 184-residue polypeptide: Ribosome-recycling factor (184 aa).

The protein belongs to the RRF family.

It is found in the cytoplasm. Its function is as follows. Responsible for the release of ribosomes from messenger RNA at the termination of protein biosynthesis. May increase the efficiency of translation by recycling ribosomes from one round of translation to another. The sequence is that of Ribosome-recycling factor from Mycoplasma pneumoniae (strain ATCC 29342 / M129 / Subtype 1) (Mycoplasmoides pneumoniae).